The chain runs to 265 residues: MRLVKKEFPDVGELVIGTVKKIAEHGAYVYLDEYDLEAFAPTQEIVQSWFHSIRDYVKEGNKTVFKVISVNPKMRVVEVSLKRVRVDEKEKKLLLYRHRVRVLKLLEIAMKKLNRPAEEALKVMWYLEEQFGDPFKVFEEVVKTGPHVLDDLQLDAKLKEIIIELARQQVELPPTKISGIIKIVSVEGDGVEKIKAALIELEKTLREKFPQISTKIYVVGPPRYRIDLTGQQPKQVEAAFSEAANILQALQKKYKVIGNIQRIEQ.

The S1 motif domain occupies 12–82 (GELVIGTVKK…KMRVVEVSLK (71 aa)).

Belongs to the eIF-2-alpha family. In terms of assembly, heterotrimer composed of an alpha, a beta and a gamma chain.

In terms of biological role, eIF-2 functions in the early steps of protein synthesis by forming a ternary complex with GTP and initiator tRNA. The polypeptide is Translation initiation factor 2 subunit alpha (Pyrobaculum aerophilum (strain ATCC 51768 / DSM 7523 / JCM 9630 / CIP 104966 / NBRC 100827 / IM2)).